We begin with the raw amino-acid sequence, 155 residues long: SsrA-binding protein (155 aa).

Positions 135–147 (TIKRRDQERDIKK) are enriched in basic and acidic residues. The interval 135-155 (TIKRRDQERDIKKQMKHYNAR) is disordered.

This sequence belongs to the SmpB family.

It localises to the cytoplasm. Its function is as follows. Required for rescue of stalled ribosomes mediated by trans-translation. Binds to transfer-messenger RNA (tmRNA), required for stable association of tmRNA with ribosomes. tmRNA and SmpB together mimic tRNA shape, replacing the anticodon stem-loop with SmpB. tmRNA is encoded by the ssrA gene; the 2 termini fold to resemble tRNA(Ala) and it encodes a 'tag peptide', a short internal open reading frame. During trans-translation Ala-aminoacylated tmRNA acts like a tRNA, entering the A-site of stalled ribosomes, displacing the stalled mRNA. The ribosome then switches to translate the ORF on the tmRNA; the nascent peptide is terminated with the 'tag peptide' encoded by the tmRNA and targeted for degradation. The ribosome is freed to recommence translation, which seems to be the essential function of trans-translation. This Streptococcus pyogenes serotype M3 (strain SSI-1) protein is SsrA-binding protein.